A 161-amino-acid chain; its full sequence is Lipoprotein signal peptidase (161 aa).

Helical transmembrane passes span 9–29, 63–83, and 88–108; these read ISLL…WLIT, KMLF…IFYI, and FNLF…GNFI. Active-site residues include D118 and D136. A helical transmembrane segment spans residues 131 to 151; the sequence is IFNIADSSLTIGVIFVIITLI.

This sequence belongs to the peptidase A8 family.

It localises to the cell membrane. The enzyme catalyses Release of signal peptides from bacterial membrane prolipoproteins. Hydrolyzes -Xaa-Yaa-Zaa-|-(S,diacylglyceryl)Cys-, in which Xaa is hydrophobic (preferably Leu), and Yaa (Ala or Ser) and Zaa (Gly or Ala) have small, neutral side chains.. It functions in the pathway protein modification; lipoprotein biosynthesis (signal peptide cleavage). Its function is as follows. This protein specifically catalyzes the removal of signal peptides from prolipoproteins. The sequence is that of Lipoprotein signal peptidase from Staphylococcus epidermidis (strain ATCC 35984 / DSM 28319 / BCRC 17069 / CCUG 31568 / BM 3577 / RP62A).